Here is a 747-residue protein sequence, read N- to C-terminus: Protein PHTF2 (747 aa).

One can recognise a PHTF domain in the interval 6–153 (TDAIVWYQKK…VHCQIVSTRT (148 aa)). Transmembrane regions (helical) follow at residues 98 to 118 (VIFS…VLFC) and 126 to 146 (IPLT…TVHC). Disordered stretches follow at residues 170 to 192 (KAAH…TQEG) and 268 to 365 (EDAA…SETE). Basic and acidic residues predominate over residues 172–181 (AHLEVHREGD). A compositionally biased stretch (polar residues) spans 182-192 (GSSTTDNTQEG). N-linked (GlcNAc...) asparagine glycosylation is present at N291. The span at 321-331 (RNRKPHHYKKH) shows a compositional bias: basic residues. The span at 340 to 352 (SGTSCSSRCSSSR) shows a compositional bias: low complexity. Positions 353–362 (QDSESTRPES) are enriched in basic and acidic residues. The next 4 helical transmembrane spans lie at 459-479 (IGYQ…PFVF), 515-535 (VLIS…LLCV), 596-616 (VIVS…CAQL), and 630-650 (WELV…VTLG). Residues N659 and N718 are each glycosylated (N-linked (GlcNAc...) asparagine). A helical transmembrane segment spans residues 722–742 (VVILSAVSGVISDLLGFNLKL).

It localises to the membrane. This is Protein PHTF2 (Phtf2) from Mus musculus (Mouse).